A 398-amino-acid chain; its full sequence is Bone morphogenetic protein 2-B (398 aa).

The N-terminal stretch at 1-23 is a signal peptide; sequence MVAGIHSLLLLQFYQILLSGCTG. Positions 24–284 are excised as a propeptide; sequence LVPEEGKRKY…GHALHKRQKR (261 aa). Residues Asn-137, Asn-202, Asn-237, and Asn-340 are each glycosylated (N-linked (GlcNAc...) asparagine). 3 cysteine pairs are disulfide-bonded: Cys-298-Cys-363, Cys-327-Cys-395, and Cys-331-Cys-397.

The protein belongs to the TGF-beta family. As to quaternary structure, homodimer; disulfide-linked.

The protein localises to the secreted. Functionally, induces cartilage and bone formation. This is Bone morphogenetic protein 2-B (bmp2-b) from Xenopus laevis (African clawed frog).